A 375-amino-acid polypeptide reads, in one-letter code: Sulfite efflux pump SSU1 (375 aa).

The Cytoplasmic segment spans residues 1–25 (MPSGSGFHNIEEAGEKARKRDDWIA). A helical membrane pass occupies residues 26–46 (ISNFHPGWFSVNMGTGITAIL). Over 47-59 (LQNLPYQFPGLHY) the chain is Extracellular. The chain crosses the membrane as a helical span at residues 60-80 (IAVVLFILNVIIFFLFLTISI). The Cytoplasmic portion of the chain corresponds to 81–101 (TRYCLWPDKFKAMLAHPAHSM). Residues 102 to 122 (LLGTFPMGFATIINCIVFICV) form a helical membrane-spanning segment. Residues 123 to 135 (PVWGEWASRFAWG) lie on the Extracellular side of the membrane. A helical membrane pass occupies residues 136–156 (LWWIDAAVSVAICYFVPFMLM). The Cytoplasmic segment spans residues 157–167 (TKHTSSLETMT). The helical transmembrane segment at 168–188 (AAWLLPIVAPVVAAASGGVVA) threads the bilayer. Residues 189 to 200 (DSLQNDTHALIT) are Extracellular-facing. N193 carries an N-linked (GlcNAc...) asparagine glycan. A helical transmembrane segment spans residues 201–221 (ILVCYAMWGSAVPLAMVILVI). Residues 222–234 (YFQRLAIHKLVPR) lie on the Cytoplasmic side of the membrane. Residues 235-255 (AAIVSALLPIGPLGQGGFGLM) form a helical membrane-spanning segment. Topologically, residues 256 to 277 (QLGVVAKRVFPRLDFLAPIAGD) are extracellular. A helical membrane pass occupies residues 278-298 (IFYVMGAFIAMIMWGFGLIWL). Over 299–309 (WFALASFTRGK) the chain is Cytoplasmic. The helical transmembrane segment at 310–330 (FYFNIGWWAFTFPLGVFTTAT) threads the bilayer. Topologically, residues 331-343 (TQMGKEFNSPFFD) are extracellular. Residues 344–364 (ILGTFFSIVVTCMWVLVFALT) traverse the membrane as a helical segment. Topologically, residues 365–375 (VYKSCTKELFR) are cytoplasmic.

Belongs to the tellurite-resistance/dicarboxylate transporter (TDT) family.

It localises to the cell membrane. Functionally, sulphite efflux pump required for the secretion of sulphite as a reducing agent. In the presence of sulphite, cystine in keratin is directly cleaved to cysteine and S-sulphocysteine, and thereby, reduced proteins become accessible to hydrolysis by a variety of secreted endo- and exoproteases. Excretion of sulphite mediated by an efflux pump also represents a detoxification pathway for dermatophytes during infection of the epidermal stratum corneum, hair and nails, which are rich in cysteine. This is Sulfite efflux pump SSU1 (SSU1) from Trichophyton rubrum (Athlete's foot fungus).